A 456-amino-acid polypeptide reads, in one-letter code: Glycerol-3-phosphate dehydrogenase [NAD(+)] At3g07690, cytosolic (456 aa).

Residues 41–46, Lys-189, and Ala-228 contribute to the NAD(+) site; that span reads GAGAWG. A substrate-binding site is contributed by Lys-189. Lys-278 acts as the Proton acceptor in catalysis. Residues Arg-340 and Gln-368 each contribute to the NAD(+) site. Residue 340–341 participates in substrate binding; that stretch reads RN.

The protein belongs to the NAD-dependent glycerol-3-phosphate dehydrogenase family. In terms of assembly, homodimer.

The protein localises to the cytoplasm. The catalysed reaction is sn-glycerol 3-phosphate + NAD(+) = dihydroxyacetone phosphate + NADH + H(+). Functionally, required for glycerol-3-phosphate (G3P) accumulation during systemic acquired resistance (SAR) establishment. In Arabidopsis thaliana (Mouse-ear cress), this protein is Glycerol-3-phosphate dehydrogenase [NAD(+)] At3g07690, cytosolic.